We begin with the raw amino-acid sequence, 591 residues long: Adenine deaminase (591 aa).

The protein belongs to the metallo-dependent hydrolases superfamily. Adenine deaminase family. Homodimer. The cofactor is Mn(2+).

It carries out the reaction adenine + H2O + H(+) = hypoxanthine + NH4(+). The protein is Adenine deaminase of Edwardsiella ictaluri (strain 93-146).